The sequence spans 189 residues: Transcriptional repressor NrdR (189 aa).

The segment at 3–34 is a zinc-finger region; it reads CPFCRGDDSRVVDSREVEDGQAIRRRRSCSGC. An ATP-cone domain is found at 46 to 136; that stretch reads LSVVKRSGVT…VYRAFSSVED (91 aa). A disordered region spans residues 152–189; it reads RLPEGPEAAQGGPESKAGNGQAAGSGDPEGVKAEKSSE. The segment covering 180 to 189 has biased composition (basic and acidic residues); the sequence is EGVKAEKSSE.

It belongs to the NrdR family. Requires Zn(2+) as cofactor.

In terms of biological role, negatively regulates transcription of bacterial ribonucleotide reductase nrd genes and operons by binding to NrdR-boxes. This Saccharopolyspora erythraea (strain ATCC 11635 / DSM 40517 / JCM 4748 / NBRC 13426 / NCIMB 8594 / NRRL 2338) protein is Transcriptional repressor NrdR.